We begin with the raw amino-acid sequence, 4485 residues long: Dynein gamma chain, flagellar outer arm (4485 aa).

Positions M1–E1780 are stem. Coiled coils occupy residues I449–K469, V804–Y838, V1093–I1114, D1275–L1297, and K1699–T1727. 4 AAA regions span residues Y1781–T2002, K2061–K2279, T2384–G2638, and K2763–Y3013. ATP is bound by residues G1819–T1826, G2099–S2106, G2425–T2432, and G2802–Q2809. Coiled coils occupy residues A3077 to Q3099, E3196 to E3227, K3265 to E3343, and E3569 to R3663. A stalk region spans residues A3077–E3343. AAA stretches follow at residues L3412 to E3643 and A3857 to N4071.

This sequence belongs to the dynein heavy chain family. As to quaternary structure, consists of at least 3 heavy chains (alpha, beta and gamma), 2 intermediate chains and 8 light chains.

Its subcellular location is the cell projection. The protein resides in the cilium. The protein localises to the flagellum. It localises to the cytoplasm. It is found in the cytoskeleton. Its subcellular location is the flagellum axoneme. In terms of biological role, force generating protein of eukaryotic cilia and flagella. Produces force towards the minus ends of microtubules. Dynein has ATPase activity; the force-producing power stroke is thought to occur on release of ADP. This is Dynein gamma chain, flagellar outer arm (ODA2) from Chlamydomonas reinhardtii (Chlamydomonas smithii).